Consider the following 88-residue polypeptide: Small ribosomal subunit protein bS20 (88 aa).

It belongs to the bacterial ribosomal protein bS20 family.

In terms of biological role, binds directly to 16S ribosomal RNA. The sequence is that of Small ribosomal subunit protein bS20 from Nitrobacter winogradskyi (strain ATCC 25391 / DSM 10237 / CIP 104748 / NCIMB 11846 / Nb-255).